The primary structure comprises 131 residues: Lymphocyte antigen 6C2 (131 aa).

Positions 1-26 (MDSTHATKSCLLILLVALLCAGRAQG) are cleaved as a signal peptide. Residues 27 to 116 (LQCYECYGVP…TAGSTWTMAG (90 aa)) enclose the UPAR/Ly6 domain. 5 disulfides stabilise this stretch: Cys29-Cys53, Cys32-Cys41, Cys46-Cys74, Cys78-Cys95, and Cys96-Cys101. A lipid anchor (GPI-anchor amidated glycine) is attached at Gly109. Positions 110-131 (STWTMAGVLLFSLSSVILQTLL) are cleaved as a propeptide — removed in mature form.

Its subcellular location is the cell membrane. In Mus musculus (Mouse), this protein is Lymphocyte antigen 6C2 (Ly6c2).